The following is a 322-amino-acid chain: Cytochrome c biogenesis protein CcsA (322 aa).

The next 7 helical transmembrane spans lie at 9–29 (IFTH…LITL), 44–64 (GMIV…IYSG), 71–91 (LYES…VPYF), 143–163 (MILS…LLVI), 226–246 (VISL…VWAN), 255–275 (WDPK…YLHI), and 287–307 (AIVA…VNLL).

Belongs to the CcmF/CycK/Ccl1/NrfE/CcsA family. As to quaternary structure, may interact with Ccs1.

Its subcellular location is the plastid. The protein resides in the chloroplast thylakoid membrane. Its function is as follows. Required during biogenesis of c-type cytochromes (cytochrome c6 and cytochrome f) at the step of heme attachment. This is Cytochrome c biogenesis protein CcsA from Lactuca sativa (Garden lettuce).